The following is a 434-amino-acid chain: Alpha-enolase (434 aa).

Residue S40 participates in Mg(2+) binding. The substrate site is built by H158 and E167. The active-site Proton donor is E210. The Mg(2+) site is built by D245, E293, and D318. Substrate contacts are provided by E293 and D318. K343 (proton acceptor) is an active-site residue. Substrate is bound by residues 370–373 and K394; that span reads SHRS.

Belongs to the enolase family. In terms of assembly, homodimer. The cofactor is Mg(2+).

Its subcellular location is the cytoplasm. It catalyses the reaction (2R)-2-phosphoglycerate = phosphoenolpyruvate + H2O. The protein operates within carbohydrate degradation; glycolysis; pyruvate from D-glyceraldehyde 3-phosphate: step 4/5. The polypeptide is Alpha-enolase (Alligator mississippiensis (American alligator)).